The primary structure comprises 295 residues: uncharacterized protein (295 aa).

It localises to the plastid. Its subcellular location is the chloroplast. This is an uncharacterized protein from Euglena gracilis.